The following is an 82-amino-acid chain: Small ribosomal subunit protein bS16 (82 aa).

This sequence belongs to the bacterial ribosomal protein bS16 family.

In Synechococcus elongatus (strain ATCC 33912 / PCC 7942 / FACHB-805) (Anacystis nidulans R2), this protein is Small ribosomal subunit protein bS16.